The following is a 927-amino-acid chain: Alpha-catenin-like protein hmp-1 (927 aa).

2 coiled-coil regions span residues 319-354 and 672-696; these read TREN…RRDD and QENQ…QIDI. Positions 901 to 927 are disordered; it reads RNEIETGRDSDDEELDRRHQQRINGRL.

Belongs to the vinculin/alpha-catenin family. In terms of assembly, component of a core catenin-cadherin complex consisting of hmr-1, hmp-1 and hmp-2; the complex localizes to adherens junctions. May interact with hmp-2. In terms of tissue distribution, epidermal cells.

The protein resides in the cell junction. It localises to the adherens junction. The protein localises to the cytoplasm. In terms of biological role, required for cell migration during body enclosure and cell shape changes during body elongation. Required for proper localization of other junctional components, such as pac-1. The polypeptide is Alpha-catenin-like protein hmp-1 (hmp-1) (Caenorhabditis elegans).